The chain runs to 380 residues: Protein kinase ORF15 (380 aa).

Residues 93-371 (FIPVKVAGCL…LLIAQLTKFI (279 aa)) enclose the Protein kinase domain. An ATP-binding site is contributed by lysine 118. Aspartate 217 functions as the Proton acceptor in the catalytic mechanism.

This sequence belongs to the protein kinase superfamily. Ser/Thr protein kinase family.

It carries out the reaction L-seryl-[protein] + ATP = O-phospho-L-seryl-[protein] + ADP + H(+). The catalysed reaction is L-threonyl-[protein] + ATP = O-phospho-L-threonyl-[protein] + ADP + H(+). This is Protein kinase ORF15 (ORF15) from Ictalurid herpesvirus 1 (strain Auburn) (IcHV-1).